Reading from the N-terminus, the 298-residue chain is Thymidylate synthase (298 aa).

DUMP-binding positions include arginine 25 and 159-160 (RR). The Nucleophile role is filled by cysteine 179. DUMP-binding positions include 200–203 (RSVD), asparagine 211, and 241–243 (HLY). Aspartate 203 contributes to the (6R)-5,10-methylene-5,6,7,8-tetrahydrofolate binding site. Alanine 297 provides a ligand contact to (6R)-5,10-methylene-5,6,7,8-tetrahydrofolate.

It belongs to the thymidylate synthase family. Bacterial-type ThyA subfamily. As to quaternary structure, homodimer.

The protein resides in the cytoplasm. It catalyses the reaction dUMP + (6R)-5,10-methylene-5,6,7,8-tetrahydrofolate = 7,8-dihydrofolate + dTMP. Its pathway is pyrimidine metabolism; dTTP biosynthesis. In terms of biological role, catalyzes the reductive methylation of 2'-deoxyuridine-5'-monophosphate (dUMP) to 2'-deoxythymidine-5'-monophosphate (dTMP) while utilizing 5,10-methylenetetrahydrofolate (mTHF) as the methyl donor and reductant in the reaction, yielding dihydrofolate (DHF) as a by-product. This enzymatic reaction provides an intracellular de novo source of dTMP, an essential precursor for DNA biosynthesis. In Cereibacter sphaeroides (strain ATCC 17023 / DSM 158 / JCM 6121 / CCUG 31486 / LMG 2827 / NBRC 12203 / NCIMB 8253 / ATH 2.4.1.) (Rhodobacter sphaeroides), this protein is Thymidylate synthase.